The following is a 430-amino-acid chain: Adenylosuccinate synthetase (430 aa).

Residues 12-18 (GDEGKGK) and 40-42 (GHT) contribute to the GTP site. The active-site Proton acceptor is Asp13. Residues Asp13 and Gly40 each coordinate Mg(2+). Residues 13–16 (DEGK), 38–41 (NAGH), Thr130, Arg144, Gln224, Thr239, and Arg303 each bind IMP. Residue His41 is the Proton donor of the active site. Substrate is bound at residue 299 to 305 (TVTGRKR). GTP is bound by residues Arg305, 331 to 333 (KLD), and 413 to 415 (STS).

The protein belongs to the adenylosuccinate synthetase family. As to quaternary structure, homodimer. It depends on Mg(2+) as a cofactor.

It localises to the cytoplasm. It catalyses the reaction IMP + L-aspartate + GTP = N(6)-(1,2-dicarboxyethyl)-AMP + GDP + phosphate + 2 H(+). It participates in purine metabolism; AMP biosynthesis via de novo pathway; AMP from IMP: step 1/2. Its function is as follows. Plays an important role in the de novo pathway of purine nucleotide biosynthesis. Catalyzes the first committed step in the biosynthesis of AMP from IMP. The polypeptide is Adenylosuccinate synthetase (Cereibacter sphaeroides (strain ATCC 17025 / ATH 2.4.3) (Rhodobacter sphaeroides)).